The following is a 345-amino-acid chain: Putative pyridoxal reductase (345 aa).

The active-site Proton donor is tyrosine 60.

This sequence belongs to the aldo/keto reductase family.

Its subcellular location is the cytoplasm. It is found in the nucleus. It carries out the reaction pyridoxine + NADP(+) = pyridoxal + NADPH + H(+). The protein operates within cofactor degradation; B6 vitamer degradation; pyridoxal from pyridoxine (dehydrogenase route): step 1/1. Catalyzes the reduction of pyridoxal (PL) with NADPH and oxidation of pyridoxine (PN) with NADP(+). The polypeptide is Putative pyridoxal reductase (Saccharomyces cerevisiae (strain ATCC 204508 / S288c) (Baker's yeast)).